We begin with the raw amino-acid sequence, 604 residues long: Glucose-methanol-choline family oxidoreductase mfmG (604 aa).

The N-terminal stretch at 1 to 24 (MYMLRPSSLLLATGLLNQGSSVLA) is a signal peptide. Asn-32 is a glycosylation site (N-linked (GlcNAc...) asparagine). FAD is bound by residues 44–45 (TA) and 65–66 (EA). Residues Asn-76 and Asn-97 are each glycosylated (N-linked (GlcNAc...) asparagine). Residue 126-129 (NFMA) participates in FAD binding. Residues Asn-260, Asn-265, Asn-401, and Asn-460 are each glycosylated (N-linked (GlcNAc...) asparagine). The active-site Proton acceptor is the His-538. FAD is bound by residues Ala-572 and 584-585 (PQ).

It belongs to the GMC oxidoreductase family. As to quaternary structure, homodimer. The cofactor is FAD.

Oxidoreductase; part of the gene cluster that mediates the biosynthesis of the phthalide-terpenoid hybrid 11'-O-desmethylfendlerol. MfmG seems not to be involved directly in the biosynthesis of 11'-O-desmethylfendlerol and its role has still to be determined. The biosynthesis of 11'-O-desmethylfendlerol begins with the NR-PKS mfmB that forms 3,5-dimethylorsellinic acid (DMOA), which is then transformed into the phthalide 5,7-dihydroxy-4-(hydroxymethyl)-6-methylphthalide by the cytochrome P450 monooxygenase mfmA and the hydrolase mfmC. Subsequently, the methyltransferase mfmE catalyzes 7-O-methylation to yield 5-hydroxy-4-(hydroxymethyl)-7-methoxy-6-methylphthalide, which undergoes C-3 hydroxylation by the cytochrome P450 monooxygenase mfmF. The resultant cyclopolic acid (2,5-dihydroxy-4-(hydroxymethyl)-7-methoxy-6-methylphthalide) is then farnesylated by the DMATS-type prenyltransferase mfmD to afford 5-O-farnesylcyclopolic acid. Finally, the Pyr4-family terpene cyclase mfmH cyclizes the farnesyl moiety of 5-O-farnesylcyclopolic acid into a drimane-like structure, thus completing the biosynthesis of 11'-O-desmethylfendlerol. The protein is Glucose-methanol-choline family oxidoreductase mfmG of Annulohypoxylon moriforme (Filamentous fungus).